A 540-amino-acid chain; its full sequence is Putative serine protease F56F10.1 (540 aa).

The signal sequence occupies residues 1–16 (MLRNLLLLLLPLLIEA). N-linked (GlcNAc...) asparagine glycans are attached at residues Asn-58 and Asn-87. The active-site Charge relay system is Ser-182. N-linked (GlcNAc...) asparagine glycosylation is found at Asn-270, Asn-300, Asn-317, Asn-343, Asn-441, and Asn-449. Asp-453 (charge relay system) is an active-site residue. Asn-475 carries N-linked (GlcNAc...) asparagine glycosylation. His-479 serves as the catalytic Charge relay system.

This sequence belongs to the peptidase S28 family.

This is Putative serine protease F56F10.1 from Caenorhabditis elegans.